The sequence spans 173 residues: Crossover junction endodeoxyribonuclease RuvC (173 aa).

Residues Asp-8, Glu-67, and Asp-139 contribute to the active site. Asp-8, Glu-67, and Asp-139 together coordinate Mg(2+).

Belongs to the RuvC family. As to quaternary structure, homodimer which binds Holliday junction (HJ) DNA. The HJ becomes 2-fold symmetrical on binding to RuvC with unstacked arms; it has a different conformation from HJ DNA in complex with RuvA. In the full resolvosome a probable DNA-RuvA(4)-RuvB(12)-RuvC(2) complex forms which resolves the HJ. Requires Mg(2+) as cofactor.

Its subcellular location is the cytoplasm. It catalyses the reaction Endonucleolytic cleavage at a junction such as a reciprocal single-stranded crossover between two homologous DNA duplexes (Holliday junction).. In terms of biological role, the RuvA-RuvB-RuvC complex processes Holliday junction (HJ) DNA during genetic recombination and DNA repair. Endonuclease that resolves HJ intermediates. Cleaves cruciform DNA by making single-stranded nicks across the HJ at symmetrical positions within the homologous arms, yielding a 5'-phosphate and a 3'-hydroxyl group; requires a central core of homology in the junction. The consensus cleavage sequence is 5'-(A/T)TT(C/G)-3'. Cleavage occurs on the 3'-side of the TT dinucleotide at the point of strand exchange. HJ branch migration catalyzed by RuvA-RuvB allows RuvC to scan DNA until it finds its consensus sequence, where it cleaves and resolves the cruciform DNA. The sequence is that of Crossover junction endodeoxyribonuclease RuvC from Enterobacter sp. (strain 638).